Here is a 533-residue protein sequence, read N- to C-terminus: Acyl-CoA-binding domain-containing protein 5 (533 aa).

In terms of domain architecture, ACB spans 42–131; that stretch reads HETRFEAAVK…MKKILETMPM (90 aa). Residues 53–62, 73–77, lysine 99, and tyrosine 118 each bind an acyl-CoA; these read IQSLPKNGSF and YSFYK. Residues 182–227 form a disordered region; that stretch reads TPNAKTVNGKAESSDSGAESEEEAAQEDPKRPEPRDSDKKMMKKSA. Phosphoserine is present on residues serine 194, serine 195, serine 197, and serine 201. Residues 208-227 show a composition bias toward basic and acidic residues; that stretch reads EDPKRPEPRDSDKKMMKKSA. A phosphoserine mark is found at serine 244 and serine 314. The segment at 339 to 443 is disordered; that stretch reads GGNPSQPLES…ERWGSDRGSR (105 aa). A compositionally biased stretch (basic and acidic residues) spans 374-383; that stretch reads GKGEVKRGGE. Serine 429 is modified (phosphoserine). The segment covering 432–442 has biased composition (basic and acidic residues); it reads DGERWGSDRGS. The stretch at 448-478 forms a coiled coil; that stretch reads EQIALVLMRLQEDMQNVLQRLHKLEMLAASQ. N6-acetyllysine is present on lysine 470. Residues 503 to 525 form a helical membrane-spanning segment; that stretch reads SPGALTFAIIWPFIAQWLVHLYY.

The protein belongs to the ATG37 family. Highly expressed in brain and liver. Lower levels of expression in spleen and heart.

The protein localises to the peroxisome membrane. In terms of biological role, acyl-CoA binding protein which acts as the peroxisome receptor for pexophagy but is dispensable for aggrephagy and nonselective autophagy. Binds medium- and long-chain acyl-CoA esters. The sequence is that of Acyl-CoA-binding domain-containing protein 5 (ACBD5) from Bos taurus (Bovine).